The primary structure comprises 154 residues: Lipoprotein signal peptidase (154 aa).

Transmembrane regions (helical) follow at residues isoleucine 4 to isoleucine 24, leucine 62 to isoleucine 82, and glycine 84 to isoleucine 104. Residues aspartate 114 and aspartate 130 contribute to the active site. A helical transmembrane segment spans residues isoleucine 125–tryptophan 145.

This sequence belongs to the peptidase A8 family.

Its subcellular location is the cell membrane. The catalysed reaction is Release of signal peptides from bacterial membrane prolipoproteins. Hydrolyzes -Xaa-Yaa-Zaa-|-(S,diacylglyceryl)Cys-, in which Xaa is hydrophobic (preferably Leu), and Yaa (Ala or Ser) and Zaa (Gly or Ala) have small, neutral side chains.. Its pathway is protein modification; lipoprotein biosynthesis (signal peptide cleavage). Functionally, this protein specifically catalyzes the removal of signal peptides from prolipoproteins. This Streptococcus agalactiae serotype Ia (strain ATCC 27591 / A909 / CDC SS700) protein is Lipoprotein signal peptidase.